A 1397-amino-acid chain; its full sequence is DNA-directed RNA polymerase subunit beta (1397 aa).

This sequence belongs to the RNA polymerase beta chain family. As to quaternary structure, the RNAP catalytic core consists of 2 alpha, 1 beta, 1 beta' and 1 omega subunit. When a sigma factor is associated with the core the holoenzyme is formed, which can initiate transcription.

It catalyses the reaction RNA(n) + a ribonucleoside 5'-triphosphate = RNA(n+1) + diphosphate. Its function is as follows. DNA-dependent RNA polymerase catalyzes the transcription of DNA into RNA using the four ribonucleoside triphosphates as substrates. The sequence is that of DNA-directed RNA polymerase subunit beta from Rhodospirillum centenum (strain ATCC 51521 / SW).